Reading from the N-terminus, the 502-residue chain is Glycerol kinase (502 aa).

T12 contributes to the ADP binding site. ATP-binding residues include T12, T13, and S14. Residue T12 participates in sn-glycerol 3-phosphate binding. R16 is an ADP binding site. Sn-glycerol 3-phosphate is bound by residues R82, E83, Y134, and D243. Residues R82, E83, Y134, D243, and Q244 each contribute to the glycerol site. T265 and G308 together coordinate ADP. Residues T265, G308, Q312, and G412 each contribute to the ATP site. G412 contributes to the ADP binding site.

Belongs to the FGGY kinase family.

The enzyme catalyses glycerol + ATP = sn-glycerol 3-phosphate + ADP + H(+). Its pathway is polyol metabolism; glycerol degradation via glycerol kinase pathway; sn-glycerol 3-phosphate from glycerol: step 1/1. Inhibited by fructose 1,6-bisphosphate (FBP). Key enzyme in the regulation of glycerol uptake and metabolism. Catalyzes the phosphorylation of glycerol to yield sn-glycerol 3-phosphate. This Methylobacterium nodulans (strain LMG 21967 / CNCM I-2342 / ORS 2060) protein is Glycerol kinase.